The sequence spans 397 residues: Phosphoglycerate kinase (397 aa).

Residues 23–25, Arg-38, 61–64, Arg-122, and Arg-155 contribute to the substrate site; these read DFN and HMGK. Residues Lys-206, Gly-296, Glu-327, and 353-356 each bind ATP; that span reads GGDS.

It belongs to the phosphoglycerate kinase family. As to quaternary structure, monomer.

It is found in the cytoplasm. It carries out the reaction (2R)-3-phosphoglycerate + ATP = (2R)-3-phospho-glyceroyl phosphate + ADP. Its pathway is carbohydrate degradation; glycolysis; pyruvate from D-glyceraldehyde 3-phosphate: step 2/5. The polypeptide is Phosphoglycerate kinase (Clostridium perfringens (strain SM101 / Type A)).